The following is a 145-amino-acid chain: Aspartate 1-decarboxylase (145 aa).

Catalysis depends on serine 26, which acts as the Schiff-base intermediate with substrate; via pyruvic acid. Serine 26 bears the Pyruvic acid (Ser) mark. Threonine 58 is a substrate binding site. Tyrosine 59 serves as the catalytic Proton donor. 74 to 76 (GGA) lines the substrate pocket.

It belongs to the PanD family. Heterooctamer of four alpha and four beta subunits. Requires pyruvate as cofactor. Post-translationally, is synthesized initially as an inactive proenzyme, which is activated by self-cleavage at a specific serine bond to produce a beta-subunit with a hydroxyl group at its C-terminus and an alpha-subunit with a pyruvoyl group at its N-terminus.

The protein resides in the cytoplasm. The enzyme catalyses L-aspartate + H(+) = beta-alanine + CO2. It participates in cofactor biosynthesis; (R)-pantothenate biosynthesis; beta-alanine from L-aspartate: step 1/1. Catalyzes the pyruvoyl-dependent decarboxylation of aspartate to produce beta-alanine. The polypeptide is Aspartate 1-decarboxylase (Synechocystis sp. (strain ATCC 27184 / PCC 6803 / Kazusa)).